The following is a 152-amino-acid chain: MFDILVYLFENYFDAGNCPDSATLTRKLTMAGFDDEEITLALDWLSDLSRHDEEGYLAGLAESDSMRHFTEEEMEIIDTEGRGFIFFLEQAGVINPLQRELLIDRVIRMDGDTASIEKIKLVVLFDLWIQNQLTDRSIVEGLFVVSDSHQRH.

This sequence belongs to the Smg family.

The chain is Protein Smg homolog from Nitrosomonas europaea (strain ATCC 19718 / CIP 103999 / KCTC 2705 / NBRC 14298).